Reading from the N-terminus, the 882-residue chain is Alanine--tRNA ligase (882 aa).

Zn(2+) is bound by residues His-576, His-580, Cys-678, and His-682.

It belongs to the class-II aminoacyl-tRNA synthetase family. Zn(2+) is required as a cofactor.

It localises to the cytoplasm. The catalysed reaction is tRNA(Ala) + L-alanine + ATP = L-alanyl-tRNA(Ala) + AMP + diphosphate. Catalyzes the attachment of alanine to tRNA(Ala) in a two-step reaction: alanine is first activated by ATP to form Ala-AMP and then transferred to the acceptor end of tRNA(Ala). Also edits incorrectly charged Ser-tRNA(Ala) and Gly-tRNA(Ala) via its editing domain. The protein is Alanine--tRNA ligase of Anaplasma marginale (strain St. Maries).